Reading from the N-terminus, the 291-residue chain is N-acetylmannosamine kinase (291 aa).

ATP-binding positions include 5–12 (AIDIGGTK) and 132–139 (GVGGGVVC). Residues His156, Cys166, Cys168, and Cys173 each coordinate Zn(2+).

It belongs to the ROK (NagC/XylR) family. NanK subfamily. In terms of assembly, homodimer.

The enzyme catalyses an N-acyl-D-mannosamine + ATP = an N-acyl-D-mannosamine 6-phosphate + ADP + H(+). It participates in amino-sugar metabolism; N-acetylneuraminate degradation; D-fructose 6-phosphate from N-acetylneuraminate: step 2/5. Its function is as follows. Catalyzes the phosphorylation of N-acetylmannosamine (ManNAc) to ManNAc-6-P. The chain is N-acetylmannosamine kinase from Salmonella agona (strain SL483).